The sequence spans 90 residues: DNA-directed RNA polymerase subunit omega (90 aa).

Belongs to the RNA polymerase subunit omega family. As to quaternary structure, the RNAP catalytic core consists of 2 alpha, 1 beta, 1 beta' and 1 omega subunit. When a sigma factor is associated with the core the holoenzyme is formed, which can initiate transcription.

The catalysed reaction is RNA(n) + a ribonucleoside 5'-triphosphate = RNA(n+1) + diphosphate. Functionally, promotes RNA polymerase assembly. Latches the N- and C-terminal regions of the beta' subunit thereby facilitating its interaction with the beta and alpha subunits. This is DNA-directed RNA polymerase subunit omega from Saccharophagus degradans (strain 2-40 / ATCC 43961 / DSM 17024).